The sequence spans 72 residues: MANYQNASNRNSSNKLVAPGAQAAIDQMKFEIASEFGVNLGPDATARANGSVGGEITKRLVQLAEQNLGGKY.

Belongs to the alpha/beta-type SASP family.

Its function is as follows. SASP are bound to spore DNA. They are double-stranded DNA-binding proteins that cause DNA to change to an a-like conformation. They protect the DNA backbone from chemical and enzymatic cleavage and are thus involved in dormant spore's high resistance to UV light. This chain is Small, acid-soluble spore protein C (sasP-C), found in Priestia megaterium (Bacillus megaterium).